The chain runs to 77 residues: Blood-induced peptide 1 (77 aa).

Positions 38–71 (EDFLHQENSELKKSLKNLEMENEKLKNILKTDYN) form a coiled coil.

Functionally, plays an important role in survival in host blood through increasing tolerance to stresses such as heat, salt, or cycloheximide, which is essential for virulence. The protein is Blood-induced peptide 1 of Candida albicans (strain SC5314 / ATCC MYA-2876) (Yeast).